Consider the following 297-residue polypeptide: Protein phosphatase PTC7 homolog (297 aa).

The transit peptide at 1–27 directs the protein to the mitochondrion; it reads MLSVLSYGRLVARAVIGGLSQTDSRDY. Residues 28-292 enclose the PPM-type phosphatase domain; that stretch reads SLVSASFGFG…DDITVLLSIV (265 aa). 3 residues coordinate Mn(2+): Asp-71, Gly-72, and Asp-216.

It belongs to the PP2C family. The cofactor is Mg(2+). It depends on Mn(2+) as a cofactor.

It is found in the mitochondrion matrix. The catalysed reaction is O-phospho-L-seryl-[protein] + H2O = L-seryl-[protein] + phosphate. It carries out the reaction O-phospho-L-threonyl-[protein] + H2O = L-threonyl-[protein] + phosphate. In terms of biological role, protein phosphatase which positively regulates biosynthesis of the ubiquinone, coenzyme Q. Dephosphorylates the ubiquinone biosynthesis protein coq7 which is likely to lead to its activation. The protein is Protein phosphatase PTC7 homolog (pptc7) of Danio rerio (Zebrafish).